Reading from the N-terminus, the 196-residue chain is UPF0215 protein MM_1007 (196 aa).

Belongs to the UPF0215 family.

This chain is UPF0215 protein MM_1007, found in Methanosarcina mazei (strain ATCC BAA-159 / DSM 3647 / Goe1 / Go1 / JCM 11833 / OCM 88) (Methanosarcina frisia).